The chain runs to 446 residues: Inhibitor of Apoptosis OPG037 (446 aa).

ANK repeat units lie at residues 71–100 (DGNYPLHIASKINNNRIVAMLLTHGADPNA), 104–135 (QHKTPLYYLSGTDDEVIERINLLVQYGAKINN), 207–237 (DGNTPLHIVCSKTVKNVDIINLLLPSTDVNK), 241–271 (FGDSPLTLLIKTLSPAHLINKLLSTSNVITD), 296–325 (YDSTDFKMAVEVGSIRCIKYLLDNDIICED), and 327–351 (MYYAVLSEYETMVDYLLFNHFSVDS).

It belongs to the orthopoxvirus OPG037 protein family. In terms of assembly, may interact with host caspase-9-Apaf-1 complex.

Its subcellular location is the host cytoplasm. Its function is as follows. Inhibits host apoptosis. Acts by associating with host apoptosome. In Variola virus (isolate Human/India/Ind3/1967) (VARV), this protein is Inhibitor of Apoptosis OPG037 (OPG037).